The following is a 392-amino-acid chain: 26S proteasome regulatory subunit 8 homolog (392 aa).

Residue 176-183 (GPPGTGKT) coordinates ATP.

This sequence belongs to the AAA ATPase family. The 26S proteasome consists of a 20S proteasome core and two 19S regulatory subunits. The 20S proteasome core is composed of 28 subunits that are arranged in four stacked rings, resulting in a barrel-shaped structure. The two end rings are each formed by seven alpha subunits, and the two central rings are each formed by seven beta subunits. The catalytic chamber with the active sites is on the inside of the barrel.

The protein resides in the cytoplasm. It is found in the nucleus. Functionally, acts as a regulatory subunit of the 26S proteasome which degrades poly-ubiquitinated proteins in the cytoplasm and in the nucleus. It is essential for the regulated turnover of proteins and for the removal of misfolded proteins. The proteasome is a multicatalytic proteinase complex that is characterized by its ability to cleave peptides with Arg, Phe, Tyr, Leu, and Glu adjacent to the leaving group at neutral or slightly basic pH. This Encephalitozoon cuniculi (strain GB-M1) (Microsporidian parasite) protein is 26S proteasome regulatory subunit 8 homolog (RPT6).